Here is a 135-residue protein sequence, read N- to C-terminus: Large ribosomal subunit protein uL16c (135 aa).

The protein belongs to the universal ribosomal protein uL16 family. Part of the 50S ribosomal subunit.

The protein localises to the plastid. Its subcellular location is the chloroplast. This Drimys granadensis protein is Large ribosomal subunit protein uL16c.